The chain runs to 337 residues: Anthranilate phosphoribosyltransferase (337 aa).

5-phospho-alpha-D-ribose 1-diphosphate contacts are provided by residues glycine 80, 83-84 (GD), threonine 88, 90-93 (NIST), 108-116 (KHGNRAVSS), and serine 120. Glycine 80 contacts anthranilate. Serine 92 serves as a coordination point for Mg(2+). Anthranilate is bound at residue asparagine 111. Arginine 166 is a binding site for anthranilate. Residues aspartate 224 and glutamate 225 each contribute to the Mg(2+) site.

It belongs to the anthranilate phosphoribosyltransferase family. As to quaternary structure, homodimer. The cofactor is Mg(2+).

The enzyme catalyses N-(5-phospho-beta-D-ribosyl)anthranilate + diphosphate = 5-phospho-alpha-D-ribose 1-diphosphate + anthranilate. Its pathway is amino-acid biosynthesis; L-tryptophan biosynthesis; L-tryptophan from chorismate: step 2/5. Catalyzes the transfer of the phosphoribosyl group of 5-phosphorylribose-1-pyrophosphate (PRPP) to anthranilate to yield N-(5'-phosphoribosyl)-anthranilate (PRA). The chain is Anthranilate phosphoribosyltransferase from Anaeromyxobacter sp. (strain Fw109-5).